The primary structure comprises 94 residues: Integration host factor subunit beta (94 aa).

The protein belongs to the bacterial histone-like protein family. In terms of assembly, heterodimer of an alpha and a beta chain.

In terms of biological role, this protein is one of the two subunits of integration host factor, a specific DNA-binding protein that functions in genetic recombination as well as in transcriptional and translational control. The chain is Integration host factor subunit beta from Salmonella arizonae (strain ATCC BAA-731 / CDC346-86 / RSK2980).